The following is a 498-amino-acid chain: Lysine--tRNA ligase (498 aa).

Residues Glu-408 and Glu-415 each coordinate Mg(2+).

This sequence belongs to the class-II aminoacyl-tRNA synthetase family. As to quaternary structure, homodimer. Requires Mg(2+) as cofactor.

It localises to the cytoplasm. It catalyses the reaction tRNA(Lys) + L-lysine + ATP = L-lysyl-tRNA(Lys) + AMP + diphosphate. The polypeptide is Lysine--tRNA ligase (Pediococcus pentosaceus (strain ATCC 25745 / CCUG 21536 / LMG 10740 / 183-1w)).